The chain runs to 103 residues: Large ribosomal subunit protein uL24 (103 aa).

It belongs to the universal ribosomal protein uL24 family. Part of the 50S ribosomal subunit.

Its function is as follows. One of two assembly initiator proteins, it binds directly to the 5'-end of the 23S rRNA, where it nucleates assembly of the 50S subunit. In terms of biological role, one of the proteins that surrounds the polypeptide exit tunnel on the outside of the subunit. This chain is Large ribosomal subunit protein uL24, found in Exiguobacterium sibiricum (strain DSM 17290 / CCUG 55495 / CIP 109462 / JCM 13490 / 255-15).